We begin with the raw amino-acid sequence, 496 residues long: Stomatal closure-related actin-binding protein 1 (496 aa).

The stretch at 126–269 (RNKDDVEEAI…FLQLQKKLAM (144 aa)) forms a coiled coil.

Belongs to the SCAB family. In terms of assembly, dimer. Dimerization is required for actin-binding activity. Expressed in roots, stems, leaves, flowers, siliques and guard cells.

The protein resides in the cytoplasm. The protein localises to the cytoskeleton. Plant-specific actin binding protein that bundles and stabilizes microfilaments (MFs). Has no nucleation or capping activity. Regulates MF reorganization during stomatal closure. The binding to F-actin is insensitive to Ca(2+) and pH. Binds weakly to inositol phosphates. This Arabidopsis thaliana (Mouse-ear cress) protein is Stomatal closure-related actin-binding protein 1.